The primary structure comprises 934 residues: Phosphoenolpyruvate carboxylase (934 aa).

Active-site residues include histidine 161 and lysine 593.

It belongs to the PEPCase type 1 family. Mg(2+) is required as a cofactor.

The enzyme catalyses oxaloacetate + phosphate = phosphoenolpyruvate + hydrogencarbonate. In terms of biological role, forms oxaloacetate, a four-carbon dicarboxylic acid source for the tricarboxylic acid cycle. This is Phosphoenolpyruvate carboxylase (ppc) from Mycobacterium leprae (strain TN).